Reading from the N-terminus, the 218-residue chain is Ras-related protein Rab-27B (218 aa).

At T2 the chain carries N-acetylthreonine. 16 to 24 (GDSGVGKTT) contributes to the GTP binding site. An Effector region motif is present at residues 38 to 46 (FITTVGIDF). GTP contacts are provided by residues 74 to 78 (DTAGQ), 133 to 136 (NKAD), and 163 to 165 (SAA). A disulfide bridge connects residues C123 and C188. 2 S-geranylgeranyl cysteine lipidation sites follow: C216 and C218. C218 bears the Cysteine methyl ester mark.

Belongs to the small GTPase superfamily. Rab family. As to quaternary structure, interacts with SYTL2, SYTL4, MYRIP and MLPH. Interacts with RPH3A and RPH3A. Interacts (GDP-bound form preferentially) with DENND10.

The protein resides in the membrane. The protein localises to the late endosome. The enzyme catalyses GTP + H2O = GDP + phosphate + H(+). With respect to regulation, regulated by guanine nucleotide exchange factors (GEFs) which promote the exchange of bound GDP for free GTP, GTPase activating proteins (GAPs) which increase the GTP hydrolysis activity, and GDP dissociation inhibitors which inhibit the dissociation of the nucleotide from the GTPase. Activated by GEFs such as DENND10. In terms of biological role, small GTPase which cycles between active GTP-bound and inactive GDP-bound states. In its active state, binds to a variety of effector proteins to regulate homeostasis of late endocytic pathway, including endosomal positioning, maturation and secretion. Plays a role in NTRK2/TRKB axonal anterograde transport by facilitating the association of NTRK2/TRKB with KLC1. May be involved in targeting uroplakins to urothelial apical membranes. The protein is Ras-related protein Rab-27B (Rab27b) of Rattus norvegicus (Rat).